The primary structure comprises 234 residues: Sugar fermentation stimulation protein A (234 aa).

The H-T-H motif DNA-binding region spans 201-220 (LLSEAQNKGVEVLAYKAELS).

This sequence belongs to the SfsA family.

In terms of biological role, binds to DNA non-specifically. Could be a regulatory factor involved in maltose metabolism. The protein is Sugar fermentation stimulation protein A of Salmonella choleraesuis (strain SC-B67).